Consider the following 347-residue polypeptide: tRNA N6-adenosine threonylcarbamoyltransferase (347 aa).

Residues His-113 and His-117 each contribute to the Fe cation site. Substrate-binding positions include 136–140 (IVSGG), Asp-170, Gly-183, Asp-187, and Asn-282. Fe cation is bound at residue Asp-310.

The protein belongs to the KAE1 / TsaD family. Fe(2+) serves as cofactor.

It is found in the cytoplasm. The enzyme catalyses L-threonylcarbamoyladenylate + adenosine(37) in tRNA = N(6)-L-threonylcarbamoyladenosine(37) in tRNA + AMP + H(+). Its function is as follows. Required for the formation of a threonylcarbamoyl group on adenosine at position 37 (t(6)A37) in tRNAs that read codons beginning with adenine. Is involved in the transfer of the threonylcarbamoyl moiety of threonylcarbamoyl-AMP (TC-AMP) to the N6 group of A37, together with TsaE and TsaB. TsaD likely plays a direct catalytic role in this reaction. This chain is tRNA N6-adenosine threonylcarbamoyltransferase, found in Bifidobacterium adolescentis (strain ATCC 15703 / DSM 20083 / NCTC 11814 / E194a).